A 360-amino-acid polypeptide reads, in one-letter code: D-alanine--D-alanine ligase (360 aa).

Residues 134–343 form the ATP-grasp domain; that stretch reads KILAQRVGVP…YTELITRLIQ (210 aa). 169–224 is a binding site for ATP; that stretch reads AEKLGHDMFVKPSNQGSSVGVNHVTNAEEYAAALEEAFKYDDKVLVEETVPGTEVE. Residues D297, E310, and N312 each contribute to the Mg(2+) site.

The protein belongs to the D-alanine--D-alanine ligase family. Mg(2+) serves as cofactor. Mn(2+) is required as a cofactor.

Its subcellular location is the cytoplasm. It carries out the reaction 2 D-alanine + ATP = D-alanyl-D-alanine + ADP + phosphate + H(+). Its pathway is cell wall biogenesis; peptidoglycan biosynthesis. Cell wall formation. The chain is D-alanine--D-alanine ligase from Lactobacillus acidophilus (strain ATCC 700396 / NCK56 / N2 / NCFM).